Here is a 561-residue protein sequence, read N- to C-terminus: Transmembrane protein 209 (561 aa).

At serine 11 the chain carries Phosphoserine. A helical transmembrane segment spans residues 28 to 48; sequence VVLAWGLLNVSMAGMIYTEMT. Asparagine 57 carries an N-linked (GlcNAc...) asparagine glycan. Residues 60–80 form a helical membrane-spanning segment; that stretch reads YWPLWYIELALASLFSLNALF. The residue at position 98 (serine 98) is a Phosphoserine. Disordered regions lie at residues 120 to 156 and 200 to 232; these read LAATQISPSPPSPSIQGQSVLSYSPSRSPSTSPKFAT and SSPYPTTVGPVESSGLRARYRSPPTVYNSPTDK. Residues 138-152 are compositionally biased toward low complexity; the sequence is SVLSYSPSRSPSTSP. Phosphoserine occurs at positions 201 and 248. Residues 250 to 270 form a disordered region; sequence EEKQHRVKLGSPDSTSPSTSP. Over residues 260–270 the composition is skewed to low complexity; sequence SPDSTSPSTSP. Asparagine 274 carries an N-linked (GlcNAc...) asparagine glycan. Serine 278 bears the Phosphoserine mark.

Interacts with NUP205.

Its subcellular location is the membrane. The protein resides in the nucleus envelope. It is found in the golgi apparatus. The protein localises to the cytoplasm. In terms of biological role, nuclear envelope protein which in association with NUP205, may be involved in nuclear transport of various nuclear proteins in addition to MYC. This Mus musculus (Mouse) protein is Transmembrane protein 209 (Tmem209).